A 513-amino-acid polypeptide reads, in one-letter code: Putative ADP-ribosyl glycohydrolase L444 (513 aa).

Residues 1–23 (MSDKIQSRESKTTKPTKTEKISD) show a composition bias toward basic and acidic residues. Positions 1–33 (MSDKIQSRESKTTKPTKTEKISDKSGNLSQVKS) are disordered. The span at 24–33 (KSGNLSQVKS) shows a compositional bias: polar residues.

The protein belongs to the ADP-ribosylglycohydrolase family.

This chain is Putative ADP-ribosyl glycohydrolase L444, found in Acanthamoeba polyphaga mimivirus (APMV).